Here is a 400-residue protein sequence, read N- to C-terminus: Golgin-45 (400 aa).

A disordered region spans residues 1–36; sequence MEKMTTLKSFESKGILTSTPIRGAGDGMETEEPPKS. The Tankyrase-binding motif signature appears at 22–26; that stretch reads RGAGD. Ser53 is modified (phosphoserine). Residues 126 to 263 adopt a coiled-coil conformation; it reads LSEVKKVLEK…LSEREQFRQE (138 aa). Ser356 carries the phosphoserine modification. Positions 394-400 are essential for interaction with GORASP2; sequence QGELLAL.

In terms of assembly, interacts with GORASP2. Interacts with the GTP-bound form of RAB2, but not with other Golgi Rab proteins. Identified in a complex with RAB2 and GORASP2. Post-translationally, ADP-ribosylated by tankyrase TNKS and TNKS2. Poly-ADP-ribosylated protein is recognized by RNF146, followed by ubiquitination. In terms of processing, ubiquitinated by RNF146 when poly-ADP-ribosylated, leading to its degradation.

It localises to the golgi apparatus membrane. Functionally, required for normal Golgi structure and for protein transport from the endoplasmic reticulum (ER) through the Golgi apparatus to the cell surface. This is Golgin-45 from Rattus norvegicus (Rat).